We begin with the raw amino-acid sequence, 27 residues long: Protamine-A (27 aa).

Residues 1 to 27 (ARRRRRHASTKLKRRRRRRRHGKKSHK) form a disordered region.

In terms of tissue distribution, testis.

The protein localises to the nucleus. It localises to the chromosome. In terms of biological role, protamines substitute for histones in the chromatin of sperm during the haploid phase of spermatogenesis. They compact sperm DNA into a highly condensed, stable and inactive complex. This is Protamine-A from Acipenser stellatus (Sevruga).